The primary structure comprises 801 residues: Cation/H(+) antiporter 28 (801 aa).

Helical transmembrane passes span 24–44 (ALKI…HYLM), 77–97 (SITL…VMGL), 113–133 (FIAY…TPFL), 140–160 (PYIF…PILT), 179–199 (AAGV…FIFF), 216–236 (LLMF…SPIF), 252–272 (GSHL…PTWP), 275–292 (SMYN…FLPN), 304–324 (INYL…GFII), 343–363 (LLGT…LLLG), 371–391 (SLGL…ALAI), and 403–423 (LIIF…MDII).

Belongs to the monovalent cation:proton antiporter 2 (CPA2) transporter (TC 2.A.37) family. CHX (TC 2.A.37.4) subfamily. As to expression, specifically expressed in pollen.

The protein resides in the membrane. Its function is as follows. May operate as a cation/H(+) antiporter. The chain is Cation/H(+) antiporter 28 (CHX28) from Arabidopsis thaliana (Mouse-ear cress).